Here is a 110-residue protein sequence, read N- to C-terminus: Large ribosomal subunit protein eL34 (110 aa).

Residues 1–41 (MKNVLIHKGATYKTRSNRRRKVRTPSGKLVNRRVKKHSKKH) form a disordered region. Residues 30-41 (VNRRVKKHSKKH) are compositionally biased toward basic residues.

Belongs to the eukaryotic ribosomal protein eL34 family.

This Encephalitozoon cuniculi (strain GB-M1) (Microsporidian parasite) protein is Large ribosomal subunit protein eL34 (RPL34).